Consider the following 833-residue polypeptide: Putative GPI inositol-deacylase C (833 aa).

Ser-130 is an active-site residue. Residues Asn-191 and Asn-456 are each glycosylated (N-linked (GlcNAc...) asparagine). Helical transmembrane passes span 521-541 (ILFISLPSAILYAIFLVQFHA), 560-580 (YLLTSCLAGSGIAYLTGLSQV), 617-637 (VLAPIFTVFSTGMVVLITELV), 672-692 (TVFVAVISVLVLLFFPYQLAF), and 723-743 (TICVLMTWTCIINAPVLAVWI). Asn-772 carries N-linked (GlcNAc...) asparagine glycosylation. The helical transmembrane segment at 787–807 (LLLAYTSLHCLFYGMMQAFMI) threads the bilayer.

The protein belongs to the GPI inositol-deacylase family.

It is found in the endoplasmic reticulum membrane. Functionally, involved in inositol deacylation of GPI-anchored proteins which plays important roles in the quality control and ER-associated degradation of GPI-anchored proteins. This is Putative GPI inositol-deacylase C (BST1C) from Yarrowia lipolytica (strain CLIB 122 / E 150) (Yeast).